A 314-amino-acid chain; its full sequence is MATELDKIFLTLAIVEFIIGMLGNVFIGLANCSEGIKNQKVFSVDFILTCLAISTIGHLLVILFDSHVAGLAPHLYATDRVVRPVTVLWHMTNHLTTWLATCLSIFYFFKIAHFPHSLFLWLRWRMNRVIAILLTLSLFLLIFDCLVLEMFIDISLNIIDKSNLTLYLDESKTPYDKLFLLKTLLSLNSFIPFSLCLTSLLFLFLSLVRHTRNLKLSSLGSRDSSTEAHRRAMKMVMSFLFLFIVHFFSLQVANWTFCILGNNKYTQFVMLALHAFPSCHSFILILGNSKLRQTAVRLLWHLRNYTKRPNPLPL.

Over 1–7 the chain is Extracellular; it reads MATELDK. Residues 8–28 form a helical membrane-spanning segment; that stretch reads IFLTLAIVEFIIGMLGNVFIG. Topologically, residues 29–50 are cytoplasmic; the sequence is LANCSEGIKNQKVFSVDFILTC. A helical membrane pass occupies residues 51 to 71; sequence LAISTIGHLLVILFDSHVAGL. Residues 72 to 101 lie on the Extracellular side of the membrane; it reads APHLYATDRVVRPVTVLWHMTNHLTTWLAT. A helical transmembrane segment spans residues 102–122; the sequence is CLSIFYFFKIAHFPHSLFLWL. The Cytoplasmic segment spans residues 123 to 127; sequence RWRMN. Residues 128–148 form a helical membrane-spanning segment; it reads RVIAILLTLSLFLLIFDCLVL. Topologically, residues 149–187 are extracellular; sequence EMFIDISLNIIDKSNLTLYLDESKTPYDKLFLLKTLLSL. Asn163 carries N-linked (GlcNAc...) asparagine glycosylation. A helical membrane pass occupies residues 188–208; that stretch reads NSFIPFSLCLTSLLFLFLSLV. Topologically, residues 209–238 are cytoplasmic; that stretch reads RHTRNLKLSSLGSRDSSTEAHRRAMKMVMS. Residues 239 to 259 traverse the membrane as a helical segment; that stretch reads FLFLFIVHFFSLQVANWTFCI. The Extracellular portion of the chain corresponds to 260 to 265; sequence LGNNKY. Residues 266 to 286 form a helical membrane-spanning segment; it reads TQFVMLALHAFPSCHSFILIL. The Cytoplasmic segment spans residues 287-314; the sequence is GNSKLRQTAVRLLWHLRNYTKRPNPLPL.

The protein belongs to the G-protein coupled receptor T2R family.

The protein localises to the membrane. Functionally, receptor that may play a role in the perception of bitterness and is gustducin-linked. May play a role in sensing the chemical composition of the gastrointestinal content. The activity of this receptor may stimulate alpha gustducin, mediate PLC-beta-2 activation and lead to the gating of TRPM5. This chain is Taste receptor type 2 member 42 (TAS2R42), found in Papio hamadryas (Hamadryas baboon).